We begin with the raw amino-acid sequence, 76 residues long: Omega-scoloptoxin(13)-Ssm2a (76 aa).

Positions 1 to 22 are cleaved as a signal peptide; the sequence is MAYIYALIFAIVVCMNTDVIQA.

Contains 4 disulfide bonds. As to expression, expressed by the venom gland.

Its subcellular location is the secreted. In terms of biological role, inhibits voltage-gated calcium channel (Cav) currents in DRG neurons (IC(50)=1590 nM). This chain is Omega-scoloptoxin(13)-Ssm2a, found in Scolopendra mutilans (Chinese red-headed centipede).